The chain runs to 620 residues: Chaperone protein HscA homolog (620 aa).

The protein belongs to the heat shock protein 70 family.

Its function is as follows. Chaperone involved in the maturation of iron-sulfur cluster-containing proteins. Has a low intrinsic ATPase activity which is markedly stimulated by HscB. The protein is Chaperone protein HscA homolog of Pseudomonas putida (strain ATCC 47054 / DSM 6125 / CFBP 8728 / NCIMB 11950 / KT2440).